The sequence spans 362 residues: Oxysterol-binding protein 5 (362 aa).

This sequence belongs to the OSBP family.

This Dictyostelium discoideum (Social amoeba) protein is Oxysterol-binding protein 5 (osbE).